The primary structure comprises 283 residues: Bifunctional protein FolD (283 aa).

NADP(+)-binding positions include 163 to 165 (GRS), S188, and I229.

The protein belongs to the tetrahydrofolate dehydrogenase/cyclohydrolase family. As to quaternary structure, homodimer.

It carries out the reaction (6R)-5,10-methylene-5,6,7,8-tetrahydrofolate + NADP(+) = (6R)-5,10-methenyltetrahydrofolate + NADPH. It catalyses the reaction (6R)-5,10-methenyltetrahydrofolate + H2O = (6R)-10-formyltetrahydrofolate + H(+). It functions in the pathway one-carbon metabolism; tetrahydrofolate interconversion. Functionally, catalyzes the oxidation of 5,10-methylenetetrahydrofolate to 5,10-methenyltetrahydrofolate and then the hydrolysis of 5,10-methenyltetrahydrofolate to 10-formyltetrahydrofolate. This Campylobacter fetus subsp. fetus (strain 82-40) protein is Bifunctional protein FolD.